A 334-amino-acid polypeptide reads, in one-letter code: MAFNLRNRNFLKLLDFTPKEIAHLLELSAELKKAKYSGYEQPRLTGKNIALIFEKSSTRTRCAFEVAAFDQGAKVTYLGPSGSQIGHKESMKDTARVLGRMYDGIEYRGFGQTIVEELGQYAGVPVWNGLTDEFHPTQILADFLTMQEYANGKQLSQITFAYLGDARNNMGNSLMVGAAKMGMEIRLVAPKQFWPEEELVTQCQEIALQTGAKIVLTEEVTEGVKGCDFLYTDVWVSMGEAPEAWDERVALMTPYQINMDVIKATENPNVKFMHCLPAFHNDETTLGKEIAEKYGMNGLEVTEDVFESEYSIVFDEAENRMHTIKAVMVATLGS.

Residues S57–T60, Q84, R108, and H135–Q138 each bind carbamoyl phosphate. L-ornithine-binding positions include N169, D233, and S237–M238. Carbamoyl phosphate contacts are provided by residues C275–L276 and R320.

The protein belongs to the aspartate/ornithine carbamoyltransferase superfamily. OTCase family.

The protein localises to the cytoplasm. The enzyme catalyses carbamoyl phosphate + L-ornithine = L-citrulline + phosphate + H(+). It participates in amino-acid biosynthesis; L-arginine biosynthesis; L-arginine from L-ornithine and carbamoyl phosphate: step 1/3. Reversibly catalyzes the transfer of the carbamoyl group from carbamoyl phosphate (CP) to the N(epsilon) atom of ornithine (ORN) to produce L-citrulline. This is Ornithine carbamoyltransferase from Aliivibrio fischeri (strain ATCC 700601 / ES114) (Vibrio fischeri).